A 383-amino-acid polypeptide reads, in one-letter code: Geranylgeranyl pyrophosphate synthase esdpD (383 aa).

Positions 88, 91, and 120 each coordinate isopentenyl diphosphate. The Mg(2+) site is built by aspartate 150 and aspartate 154. Arginine 159 serves as a coordination point for dimethylallyl diphosphate. Arginine 160 is a binding site for isopentenyl diphosphate. Lysine 237, threonine 238, and glutamine 271 together coordinate dimethylallyl diphosphate. Aspartate 274 serves as a coordination point for Mg(2+). Residues asparagine 278, lysine 288, and lysine 298 each coordinate dimethylallyl diphosphate.

It belongs to the FPP/GGPP synthase family. Requires Mg(2+) as cofactor.

It catalyses the reaction isopentenyl diphosphate + dimethylallyl diphosphate = (2E)-geranyl diphosphate + diphosphate. It carries out the reaction isopentenyl diphosphate + (2E)-geranyl diphosphate = (2E,6E)-farnesyl diphosphate + diphosphate. The catalysed reaction is isopentenyl diphosphate + (2E,6E)-farnesyl diphosphate = (2E,6E,10E)-geranylgeranyl diphosphate + diphosphate. It functions in the pathway secondary metabolite biosynthesis; terpenoid biosynthesis. Its function is as follows. Geranylgeranyl pyrophosphate synthase; part of the cluster that mediates the biosynthesis of shearones, diterpenoid pyrones (DPs) which are structurally diverse meroterpenoids consisting of a diterpene linked by a pyrone, and which may exhibit a range of bioactivities. Within the pathway, esdpD takes part to the biosynthesis of the molecular scaffold by providing geranylgeranyl pyrophosphate (GGPP) to the prenyltransferase esdpC for C-3 geranylgeranylation of the alpha-pyrone. The molecular scaffold is commonly biosynthesized by a series of enzymes including the non-reducing polyketide synthase (NR-PKS) esdpA that generates an alpha-pyrone; the prenyltransferase esdpC that attaches a geranylgeranyl pyrophosphate (GGPP) produced by the GGPP synthase (GGPPS) esdpD onto the pyrone unit; the FAD-dependent monooxygenase esdpE that converts an olefin on the diterpene unit into an epoxide; and the terpene cyclase esdpB that catalyzes the cyclization reactions to give the molecular backbone shearone A. In the modification steps, esdpF oxidizes the hydroxy group to a ketone at C-3 and esdpG then attaches hydroxy groups at both C-11 and C-12. After that, esdpI hydroxylates at C-20 and esdpH hydroxylates at C-6'. The ether bridge is generated by nucleophilic attack of the hydroxy group at C-20 to the carbonyl carbon at C-3. EsdpH can also functions prior to esdpI. The different combinations of these modification enzymes lead to the production of diverse shearone derivatives, shearone I being the end product of the pathway. The alpha-ketoglutarate-dependent dioxygenase esdpJ seems not to be involved in this pathway. This Penicillium shearii (Eupenicillium shearii) protein is Geranylgeranyl pyrophosphate synthase esdpD.